Here is a 302-residue protein sequence, read N- to C-terminus: uncharacterized protein (302 aa).

It belongs to the HAD-like hydrolase superfamily.

This is an uncharacterized protein from Saccharomyces cerevisiae (strain ATCC 204508 / S288c) (Baker's yeast).